Here is a 157-residue protein sequence, read N- to C-terminus: 6,7-dimethyl-8-ribityllumazine synthase (157 aa).

Residues F24, S56 to E58, and V79 to I81 contribute to the 5-amino-6-(D-ribitylamino)uracil site. Residue E84–T85 coordinates (2S)-2-hydroxy-3-oxobutyl phosphate. Catalysis depends on H87, which acts as the Proton donor. 5-amino-6-(D-ribitylamino)uracil is bound at residue F112. R126 is a binding site for (2S)-2-hydroxy-3-oxobutyl phosphate.

It belongs to the DMRL synthase family.

The enzyme catalyses (2S)-2-hydroxy-3-oxobutyl phosphate + 5-amino-6-(D-ribitylamino)uracil = 6,7-dimethyl-8-(1-D-ribityl)lumazine + phosphate + 2 H2O + H(+). The protein operates within cofactor biosynthesis; riboflavin biosynthesis; riboflavin from 2-hydroxy-3-oxobutyl phosphate and 5-amino-6-(D-ribitylamino)uracil: step 1/2. Functionally, catalyzes the formation of 6,7-dimethyl-8-ribityllumazine by condensation of 5-amino-6-(D-ribitylamino)uracil with 3,4-dihydroxy-2-butanone 4-phosphate. This is the penultimate step in the biosynthesis of riboflavin. This is 6,7-dimethyl-8-ribityllumazine synthase from Pyrococcus furiosus (strain ATCC 43587 / DSM 3638 / JCM 8422 / Vc1).